Consider the following 2515-residue polypeptide: Nonribosomal peptide synthetase tpzA (2515 aa).

An adenylation 1 region spans residues 246–648 (ELATRQPGAQ…GRMGTQVKLR (403 aa)). Positions 794 to 867 (SEVEHLIHAI…DMATVALKTS (74 aa)) constitute a Carrier 1 domain. The residue at position 828 (serine 828) is an O-(pantetheine 4'-phosphoryl)serine. The condensation 1 stretch occupies residues 924-1332 (DAYPCSPLQE…IRSVPHITPE (409 aa)). Residues 1357 to 1758 (RKQSQETPSA…GRMNDQIKLR (402 aa)) are adenylation 2. A Carrier 2 domain is found at 1900–1976 (LATTNEERTL…AILSHLTGRK (77 aa)). The residue at position 1937 (serine 1937) is an O-(pantetheine 4'-phosphoryl)serine. Positions 2013-2431 (VEDIYPCGPI…LGILPPEEQK (419 aa)) are condensation 2. One can recognise a Carrier 3 domain in the interval 2436–2512 (PSLSAAVVRL…AMARRSLVVS (77 aa)). An O-(pantetheine 4'-phosphoryl)serine modification is found at serine 2473.

The protein belongs to the NRP synthetase family.

It participates in secondary metabolite biosynthesis. Nonribosomal peptide synthetase; part of the gene cluster that mediates the biosynthesis of terreazepine,. The first step of terreazepine biosynthesis is catalyzed by the indoleamine 2,3-dioxygenase tpzB which produces N-formyl-kynurenine through the catabolism of tryptophan. The two-module NRPS tpzA then utilizes anthranilate and kynurenine to assemble terreazepine. The first adenylation domain of tpzA (A1) loads anthranilate onto the T1 domain, while A2 loads kynurenine, generated through spontaneous nonenzymatic deformylation of the tzpB-supplied N-formyl-kynurenine. TpzA produces a 2:1 mixture of S-R enantiomers, which suggests that the A2 domain accepts both D- and L-kynurenine. The peptide bond formation between the tethered amino acids is catalyzed by the first condensation domain (C1) between anthranilate's carbonyl carbon and kynurenine's aliphatic primary amine. The second C domain (C2) catalyzes the final cyclization event between the aromatic amine of kynurenine and the tethered carbonyl carbon, yielding the final terreazepine product. The T3 domain may facilitate the interaction with downstream tailoring enzymes. The protein is Nonribosomal peptide synthetase tpzA of Aspergillus terreus (strain NIH 2624 / FGSC A1156).